Reading from the N-terminus, the 286-residue chain is Alpha/beta-gliadin (286 aa).

The first 20 residues, 1 to 20, serve as a signal peptide directing secretion; the sequence is MKTFLILVLLAIVATTATTA. The tract at residues 51 to 120 is disordered; it reads LGQQQPFPPQ…QQPISQQQQQ (70 aa). The segment covering 56-71 has biased composition (pro residues); sequence PFPPQQPYPQPQPFPS. Over residues 72 to 92 the composition is skewed to low complexity; the sequence is QLPYLQLQPFPQPQLPYSQPQ. The segment covering 93–104 has biased composition (pro residues); the sequence is PFRPQQPYPQPQ. Residues 105–120 show a composition bias toward low complexity; the sequence is PQYSQPQQPISQQQQQ.

Belongs to the gliadin/glutenin family. Substrate of transglutaminase.

In terms of biological role, gliadin is the major seed storage protein in wheat. The polypeptide is Alpha/beta-gliadin (Triticum aestivum (Wheat)).